Here is a 407-residue protein sequence, read N- to C-terminus: Argininosuccinate synthase (407 aa).

ATP is bound by residues 10–18 (AYSGGLDTS) and A37. L-citrulline is bound by residues Y88 and S93. G118 serves as a coordination point for ATP. L-aspartate is bound by residues T120, N124, and D125. Residue N124 participates in L-citrulline binding. R128, S180, S189, E265, and Y277 together coordinate L-citrulline.

This sequence belongs to the argininosuccinate synthase family. Type 1 subfamily. In terms of assembly, homotetramer.

It localises to the cytoplasm. It carries out the reaction L-citrulline + L-aspartate + ATP = 2-(N(omega)-L-arginino)succinate + AMP + diphosphate + H(+). It participates in amino-acid biosynthesis; L-arginine biosynthesis; L-arginine from L-ornithine and carbamoyl phosphate: step 2/3. The protein is Argininosuccinate synthase of Alcanivorax borkumensis (strain ATCC 700651 / DSM 11573 / NCIMB 13689 / SK2).